The following is a 687-amino-acid chain: POZ-, AT hook-, and zinc finger-containing protein 1 (687 aa).

The BTB domain maps to 41–130 (CDVLLRVGDE…AYTSRIVVRL (90 aa)). Residue lysine 112 forms a Glycyl lysine isopeptide (Lys-Gly) (interchain with G-Cter in SUMO2) linkage. Residues 250–260 (PFPSVASSAPP) show a composition bias toward low complexity. Residues 250–278 (PFPSVASSAPPLTGKRGRGRPRKANLLDS) are disordered. A DNA-binding region (a.T hook) is located at residues 264 to 276 (KRGRGRPRKANLL). Residue lysine 272 forms a Glycyl lysine isopeptide (Lys-Gly) (interchain with G-Cter in SUMO2) linkage. Serine 282 carries the post-translational modification Phosphoserine. The C2H2-type 1 zinc-finger motif lies at 292-314 (LPCGLCGKVFTDANRLRQHEAQH). Residues 332-351 (GENGLPISEDPDGPRKRSRT) are disordered. 5 C2H2-type zinc fingers span residues 355–377 (VACE…KLSH), 383–405 (YSCP…VRSH), 413–436 (YICQ…KQVH), 442–464 (HKCQ…LACH), and 495–518 (NFCS…KTHH). The segment covering 549–558 (EGQKCSHQDP) has biased composition (basic and acidic residues). The segment at 549–603 (EGQKCSHQDPIESSDSYGDLSDASDLKTPEKQSANGSFSCDMAVPKNKMESDGEK) is disordered. The segment at 605 to 628 (YPCPECGSFFRSKSYLNKHIQKVH) adopts a C2H2-type 7 zinc-finger fold.

This sequence belongs to the krueppel C2H2-type zinc-finger protein family. In terms of assembly, homodimer. Interacts with RNF4. Interacts (via C-terminus) with TP53; this interaction inhibits TP53 ability to activate transcription. In terms of tissue distribution, ubiquitous.

It localises to the nucleus. Its function is as follows. Transcriptional regulator that plays a role in many biological processes such as embryogenesis, senescence, T-cell development or neurogenesis. Interacts with the TP53 protein to control genes that are important in proliferation and in the DNA-damage response. Mechanistically, the interaction inhibits the DNA binding and transcriptional activity of TP53/p53. Part of the transcriptional network modulating regulatory T-cell development and controls the generation of the regulatory T-cell pool under homeostatic conditions. (Microbial infection) Plays a positive role in viral cDNA synthesis. The sequence is that of POZ-, AT hook-, and zinc finger-containing protein 1 (PATZ1) from Homo sapiens (Human).